The primary structure comprises 241 residues: Zinc finger CCHC domain-containing protein 17 (241 aa).

Residues 16-88 (YTIFQGEVAM…DRIKVSLSMK (73 aa)) enclose the S1 motif domain. At S114 the chain carries Phosphoserine. The CCHC-type zinc finger occupies 131-148 (TTCKKCGCKGHFAKDCFM). Position 144 is an N6-acetyllysine (K144). The tract at residues 160-241 (EEEEEKEEAK…KKKHKKKHKE (82 aa)) is disordered. The span at 166-178 (EEAKAEGLEKPDP) shows a compositional bias: basic and acidic residues. The segment covering 182–198 (SSRKRKKEKKKKKHRDR) has biased composition (basic residues). Residue S183 is modified to Phosphoserine. The span at 211-225 (DTGKKARHSSKDSKA) shows a compositional bias: basic and acidic residues. The segment covering 226-241 (TKKKKKKKKHKKKHKE) has biased composition (basic residues).

As to quaternary structure, interacts with PNN. Associates with the 60S ribosomal subunit. Expressed in liver, brain, heart, kidney testis, stomach, small intestine, skin, thymus, uterus, placenta, spleen, lung and skeletal muscle.

The protein resides in the nucleus. Its subcellular location is the nucleolus. This is Zinc finger CCHC domain-containing protein 17 (Zcchc17) from Mus musculus (Mouse).